We begin with the raw amino-acid sequence, 82 residues long: Protein RALF-like 8 (82 aa).

An N-terminal signal peptide occupies residues 1 to 28; sequence MGMSKSIKVILSLALVVFLALAGTKVEA. 2 disulfide bridges follow: Cys47-Cys55 and Cys67-Cys73.

The protein belongs to the plant rapid alkalinization factor (RALF) family. As to expression, expressed in leaves and flowers.

It localises to the secreted. Cell signaling peptide that may regulate plant stress, growth, and development. Mediates a rapid alkalinization of extracellular space by mediating a transient increase in the cytoplasmic Ca(2+) concentration leading to a calcium-dependent signaling events through a cell surface receptor and a concomitant activation of some intracellular mitogen-activated protein kinases. This chain is Protein RALF-like 8 (RALFL8), found in Arabidopsis thaliana (Mouse-ear cress).